The primary structure comprises 488 residues: Sucrose 6(F)-phosphate phosphorylase (488 aa).

Residues Asp-49, His-87, 195 to 197 (RLD), Glu-238, 295 to 296 (HD), 342 to 345 (DVHQ), and Arg-399 each bind sucrose 6(F)-phosphate. Asp-197 (nucleophile) is an active-site residue. Glu-238 acts as the Proton donor/acceptor in catalysis.

It belongs to the glycosyl hydrolase 13 family. Sucrose phosphorylase subfamily. In terms of assembly, monomer.

The enzyme catalyses sucrose 6(F)-phosphate + phosphate = beta-D-fructose 6-phosphate + alpha-D-glucose 1-phosphate. Its function is as follows. Catalyzes the reversible phosphorolysis of sucrose 6(F)-phosphate into alpha-D-glucose 1-phosphate (Glc1P) and D-fructose 6-phosphate. May be involved in a new pathway for the degradation of sucrose, which could become phosphorylated on its fructose moiety during uptake via a PTS system. To a lesser extent, can also reversibly act on sucrose in vitro. Is also able to catalyze transglycosylation reactions in vitro. The polypeptide is Sucrose 6(F)-phosphate phosphorylase (Thermoanaerobacterium thermosaccharolyticum (strain ATCC 7956 / DSM 571 / NCIMB 9385 / NCA 3814 / NCTC 13789 / WDCM 00135 / 2032) (Clostridium thermosaccharolyticum)).